Reading from the N-terminus, the 319-residue chain is Acetyl esterase (319 aa).

Residues 91–93 (HGG) carry the Involved in the stabilization of the negatively charged intermediate by the formation of the oxyanion hole motif. Residues serine 165, aspartate 262, and histidine 292 contribute to the active site.

Belongs to the 'GDXG' lipolytic enzyme family. Homodimer. Interacts with MalT and MelA.

The protein resides in the cytoplasm. Its function is as follows. Displays esterase activity towards short chain fatty esters (acyl chain length of up to 8 carbons). Able to hydrolyze triacetylglycerol (triacetin) and tributyrylglycerol (tributyrin), but not trioleylglycerol (triolein) or cholesterol oleate. Negatively regulates MalT activity by antagonizing maltotriose binding. Inhibits MelA galactosidase activity. In Escherichia coli O139:H28 (strain E24377A / ETEC), this protein is Acetyl esterase.